The primary structure comprises 472 residues: MSKKLEKITTRKENFADWYTSIVNNAKLIQYTDIKGMMVFQPNAWAIWEAIKNQIDVEFKKHGVRNLAMPTLIPLSEFQKEKDHIEGFAPELFMVNQIGDKKLDNSYAIRPTSEILFCNYFKNIVNSYNDLPIKNNQWCSVMRAEKTTRPFLRNAEFHWQELHAIFASENEADSFAKVILDVYTDFVQNYLCIPVIKGLKTPWERFAGAQKTYTIEAMMQDGQALQSATSHYLGQFFAKAYDIKFQGQDNQMHYVHQMSAGLSTRIIGALIMVHADDQGLILPPDIAFNQIAILTIFSNKNPQLLKISQQICEQLNNYRLFEDHSDKGIGYKLAQQEIEGTPICILVGAKELVNQQVVIVRRDTHEKINVDLTDLKLIIPKLLADIKRNIYEKAKKDLEDSIVFVNNIEELKQVIAQNKMAKAFFDGTKEDDEQIKLLTNASTRCIFDETQNGQCFYTNKKTNKLTLFARAY.

Belongs to the class-II aminoacyl-tRNA synthetase family. ProS type 3 subfamily. In terms of assembly, homodimer.

Its subcellular location is the cytoplasm. The enzyme catalyses tRNA(Pro) + L-proline + ATP = L-prolyl-tRNA(Pro) + AMP + diphosphate. Its function is as follows. Catalyzes the attachment of proline to tRNA(Pro) in a two-step reaction: proline is first activated by ATP to form Pro-AMP and then transferred to the acceptor end of tRNA(Pro). The protein is Proline--tRNA ligase of Ureaplasma parvum serovar 3 (strain ATCC 27815 / 27 / NCTC 11736).